A 226-amino-acid chain; its full sequence is UPF0758 protein LL1007 (226 aa).

The 123-residue stretch at 103 to 225 (QVLSSREYGL…YFSFREEEIR (123 aa)) folds into the MPN domain. The Zn(2+) site is built by H174, H176, and D187. The JAMM motif motif lies at 174 to 187 (HNHPSGNLKPSQAD).

Belongs to the UPF0758 family.

This Lactococcus lactis subsp. lactis (strain IL1403) (Streptococcus lactis) protein is UPF0758 protein LL1007.